The chain runs to 384 residues: Guanine nucleotide-binding protein alpha-1 subunit (384 aa).

A disordered region spans residues 1 to 22 (MGSLCSRNKHYSQADDEENTQT). The N-myristoyl glycine moiety is linked to residue glycine 2. A lipid anchor (S-palmitoyl cysteine) is attached at cysteine 5. The 347-residue stretch at 38–384 (HIQKLLLLGA…RRNLFEAGLL (347 aa)) folds into the G-alpha domain. The segment at 41-54 (KLLLLGAGDSGKST) is G1 motif. GTP contacts are provided by aspartate 49, serine 50, glycine 51, lysine 52, serine 53, threonine 54, aspartate 163, leucine 188, threonine 194, glycine 222, asparagine 288, lysine 289, aspartate 291, and alanine 356. Serine 53 is a Mg(2+) binding site. Residues 186–194 (DVLFARIRT) form a G2 motif region. Residue threonine 194 participates in Mg(2+) binding. The segment at 215–224 (YRLFDVGGQR) is G3 motif. The segment at 284–291 (MLFLNKFD) is G4 motif. Residues 354–359 (TTALDQ) form a G5 motif region.

The protein belongs to the G-alpha family. In terms of assembly, g proteins are composed of 3 units; alpha, beta and gamma. The alpha chain contains the guanine nucleotide binding site. It depends on Mg(2+) as a cofactor.

Its function is as follows. Guanine nucleotide-binding proteins (G proteins) are involved as modulators or transducers in various transmembrane signaling systems. This Solanum tuberosum (Potato) protein is Guanine nucleotide-binding protein alpha-1 subunit (GPA1).